Reading from the N-terminus, the 240-residue chain is Large ribosomal subunit protein bL25 (240 aa).

Disordered regions lie at residues 1-20 (MAEN…GPAR) and 204-240 (GAAP…KAKK). Over residues 204–229 (GAAPAAGAAAPAGGAAPAAGAAPAKG) the composition is skewed to low complexity. Residues 230–240 (GEAKGGDKAKK) are compositionally biased toward basic and acidic residues.

Belongs to the bacterial ribosomal protein bL25 family. CTC subfamily. As to quaternary structure, part of the 50S ribosomal subunit; part of the 5S rRNA/L5/L18/L25 subcomplex. Contacts the 5S rRNA. Binds to the 5S rRNA independently of L5 and L18.

This is one of the proteins that binds to the 5S RNA in the ribosome where it forms part of the central protuberance. This is Large ribosomal subunit protein bL25 from Anaeromyxobacter sp. (strain K).